Here is a 681-residue protein sequence, read N- to C-terminus: Sodium-dependent phosphate transporter 1 (681 aa).

Helical transmembrane passes span 25-45 (YLWM…SVGA), 66-86 (ACIL…AKVS), 106-126 (LMAG…VASF), 162-182 (IVMS…ILFF), 207-227 (ACTV…LLGF), and 234-254 (GTIL…WFFV). Phosphoserine is present on residues S269 and S273. Residues 269–296 (SPSESPLMEKKNSLKEDHEETKLSVSDI) are disordered. Basic and acidic residues predominate over residues 275-290 (LMEKKNSLKEDHEETK). 4 helical membrane-spanning segments follow: residues 515–535 (VSLL…FAHG), 562–582 (VATP…GLWV), 604–624 (FSIE…GLPI), and 654–674 (IFMA…AIMA). An a region spans residues 554–562 (DTGDVSSKV).

The protein belongs to the inorganic phosphate transporter (PiT) (TC 2.A.20) family.

It localises to the cell membrane. It catalyses the reaction 2 Na(+)(out) + phosphate(out) = 2 Na(+)(in) + phosphate(in). In terms of biological role, sodium-phosphate symporter which preferentially transports the monovalent form of phosphate with a stoichiometry of two sodium ions per phosphate ion. May play a role in extracellular matrix and cartilage calcification as well as in vascular calcification. Essential for cell proliferation but this function is independent of its phosphate transporter activity. The sequence is that of Sodium-dependent phosphate transporter 1 (Slc20a1) from Felis catus (Cat).